Reading from the N-terminus, the 424-residue chain is MLPELQRSITWIQGTALTIGAVLGCGILILPSVTADTAGPASLFVWVFMSFLSFFLVGTLARLVKIAPSAGGITAYVQLAFQKKAGAILGWIMLGSVPIGVPIIALTGAHYVSYITEAADWQITLIAGCMLAISILLHMRGIQLSANISTLVICVIVFLLVTSIAVSLPHVTIAEFKPFLPHGWSAAGSVSVMIFFSFVGWEMITPLAEEFHRPEKDVPLSLFLAASCVAGLYIMLSFVTVGTHSYGENGEIASLAMLISKGAGESGVYVTVCLALFITFATIHANIAGFSRMVYALAREGHIPVFFGKLSATKRTPIRVLTAMAAVFGLVLAAHGLFQIDLTTLLKGPSAAFIASYICTMAAALKLLGRRDIGWWMALGAFVACAVIYSFSGWALLYPAVLAAAGYFYMKTKGGHKKKLDHVL.

11 helical membrane passes run 9–29 (ITWI…GILI), 41–61 (ASLF…GTLA), 86–106 (GAIL…IIAL), 119–139 (ADWQ…LLHM), 148–168 (ISTL…AVSL), 184–204 (WSAA…WEMI), 222–242 (LFLA…VTVG), 270–290 (VTVC…IAGF), 320–340 (VLTA…LFQI), 345–365 (LLKG…AAAL), and 377–397 (MALG…WALL).

Belongs to the amino acid-polyamine-organocation (APC) superfamily.

Its subcellular location is the cell membrane. This is an uncharacterized protein from Bacillus subtilis (strain 168).